The chain runs to 86 residues: Anti-adapter protein IraP (86 aa).

A coiled-coil region spans residues 1–36; it reads MKNLIAELLFKLAQKEEESKELCAQVEALEIIVTAM.

Belongs to the IraP family. Interacts with RssB.

It localises to the cytoplasm. Functionally, inhibits RpoS proteolysis by regulating RssB activity, thereby increasing the stability of the sigma stress factor RpoS especially during phosphate starvation, but also in stationary phase and during nitrogen starvation. Its effect on RpoS stability is due to its interaction with RssB, which probably blocks the interaction of RssB with RpoS, and the consequent delivery of the RssB-RpoS complex to the ClpXP protein degradation pathway. This Shigella flexneri serotype 5b (strain 8401) protein is Anti-adapter protein IraP.